A 198-amino-acid polypeptide reads, in one-letter code: Transcriptional regulator GfcR (198 aa).

The protein belongs to the purine/pyrimidine phosphoribosyltransferase family. GfcR subfamily.

In Methanocorpusculum labreanum (strain ATCC 43576 / DSM 4855 / Z), this protein is Transcriptional regulator GfcR.